The sequence spans 435 residues: ATP-dependent protease ATPase subunit HslU (435 aa).

Residues V18, 60 to 65 (GCGKTE), D248, E313, and R385 each bind ATP.

This sequence belongs to the ClpX chaperone family. HslU subfamily. A double ring-shaped homohexamer of HslV is capped on each side by a ring-shaped HslU homohexamer. The assembly of the HslU/HslV complex is dependent on binding of ATP.

It is found in the cytoplasm. Functionally, ATPase subunit of a proteasome-like degradation complex; this subunit has chaperone activity. The binding of ATP and its subsequent hydrolysis by HslU are essential for unfolding of protein substrates subsequently hydrolyzed by HslV. HslU recognizes the N-terminal part of its protein substrates and unfolds these before they are guided to HslV for hydrolysis. This is ATP-dependent protease ATPase subunit HslU from Beijerinckia indica subsp. indica (strain ATCC 9039 / DSM 1715 / NCIMB 8712).